Here is a 2610-residue protein sequence, read N- to C-terminus: E3 ubiquitin-protein ligase HECTD1 (2610 aa).

The segment at 246 to 269 (TVSGPSSACKPGRSTTGAPSTTAD) is disordered. Positions 258-269 (RSTTGAPSTTAD) are enriched in polar residues. ANK repeat units follow at residues 395–424 (VGQTLLNWASAFGTQEMVEFLCERGADVNR), 426–455 (QRSSSLHYAACFGRPQVAKTLLRHGANPDL), 459–491 (DGKTPLDKARERGHSEVVAILQSPGDWMCPVNK), and 579–612 (ITATVLDQEDDDDGHLLALQIIRDLVDKGGDIFL). The disordered stretch occupies residues 489–513 (VNKGDDKKKKDTNKDEEECNEPKGD). Residues 491 to 501 (KGDDKKKKDTN) are compositionally biased toward basic and acidic residues. 2 disordered regions span residues 627–657 (LAGPSSDDENEEESKPEKEDEPQEDAKELQQ) and 707–748 (SSGS…LSAP). Residues serine 631 and serine 640 each carry the phosphoserine modification. The segment covering 639–657 (ESKPEKEDEPQEDAKELQQ) has biased composition (basic and acidic residues). Over residues 707–717 (SSGSPEGGSDS) the composition is skewed to low complexity. Positions 718–729 (SESRSEFLEKLQ) are enriched in basic and acidic residues. The 73-residue stretch at 1266 to 1338 (VRSQVLKYMV…KFDLKLAPGY (73 aa)) folds into the MIB/HERC2 domain. 2 disordered regions span residues 1343 to 1406 (VASP…KTER) and 1433 to 1483 (ENVP…SMGI). Residues 1348–1365 (PVSSTVSGTTQSWSSLVK) show a composition bias toward polar residues. Low complexity-rich tracts occupy residues 1373–1395 (SAAAGSSSRKGSSSSVCSVASSS) and 1441–1458 (GSSSSASTSTLTAETGSE). Phosphoserine is present on serine 1384. A compositionally biased stretch (polar residues) spans 1469–1479 (SVRTPGESSAI). Position 1488 is a phosphoserine (serine 1488). A disordered region spans residues 1496 to 1515 (ELTNKEAASQRPLSSSASNR). The residue at position 1567 (serine 1567) is a Phosphoserine. Disordered regions lie at residues 1592-1611 (GAQSFPNLTTPGTTSTVTMS) and 1674-1757 (ELDD…KGGR). Positions 1600–1611 (TTPGTTSTVTMS) are enriched in low complexity. Residues 1674–1703 (ELDDDEDLPEPDEEDDENEDDNQEDQEYEE) are compositionally biased toward acidic residues. At threonine 1760 the chain carries Phosphothreonine. Serine 1772 carries the post-translational modification Phosphoserine. The tract at residues 1777-1797 (AFDPRPGRTNVQQTTDLEIPP) is disordered. Residues 2029–2103 (FTFPPDEFTS…AIVWLQNRRE (75 aa)) form a K-box region. The HECT domain occupies 2151–2610 (IHADRKSVLE…ATMEKGFHLN (460 aa)). Residues 2297 to 2318 (HCTESQSEASTEEGHDSLSVGS) form a disordered region. Serine 2318 bears the Phosphoserine mark. Cysteine 2579 acts as the Glycyl thioester intermediate in catalysis.

Belongs to the UPL family. K-HECT subfamily. Interacts with IGSF1.

It carries out the reaction S-ubiquitinyl-[E2 ubiquitin-conjugating enzyme]-L-cysteine + [acceptor protein]-L-lysine = [E2 ubiquitin-conjugating enzyme]-L-cysteine + N(6)-ubiquitinyl-[acceptor protein]-L-lysine.. It functions in the pathway protein modification; protein ubiquitination. In terms of biological role, E3 ubiquitin-protein ligase which accepts ubiquitin from an E2 ubiquitin-conjugating enzyme in the form of a thioester and then directly transfers the ubiquitin to targeted substrates. Mediates 'Lys-63'-linked polyubiquitination of HSP90AA1 which leads to its intracellular localization and reduced secretion. Negatively regulating HSP90AA1 secretion in cranial mesenchyme cells may impair their emigration and may be essential for the correct development of the cranial neural folds and neural tube closure. Catalyzes ubiquitination and degradation of ZNF622, an assembly factor for the ribosomal 60S subunit, in hematopoietic cells, thereby promoting hematopoietic stem cell renewal. This Homo sapiens (Human) protein is E3 ubiquitin-protein ligase HECTD1.